Here is a 673-residue protein sequence, read N- to C-terminus: Protein-arginine deiminase type-2 (673 aa).

Position 1 is an N-acetylmethionine (Met1). The Ca(2+) site is built by Asp131, Asp133, Asp135, Glu139, Asn162, Asp164, Asp166, Asp174, Asp177, Lys179, Asp185, and Asp188. Arg352 bears the Citrulline mark. Glu362, Asp397, Phe416, Leu419, and Glu420 together coordinate Ca(2+). Catalysis depends on Cys655, which acts as the Nucleophile.

Belongs to the protein arginine deiminase family. In terms of assembly, homodimer. The cofactor is Ca(2+). Expressed in various tissues including muscle, uterus, spinal cord, salivary gland and pancreas.

The protein localises to the cytoplasm. The enzyme catalyses L-arginyl-[protein] + H2O = L-citrullyl-[protein] + NH4(+). Catalyzes the deimination of arginine residues of proteins. This Mus musculus (Mouse) protein is Protein-arginine deiminase type-2 (Padi2).